Reading from the N-terminus, the 1096-residue chain is Constitutive coactivator of PPAR-gamma-like protein 2 (1096 aa).

Positions 35 to 59 are enriched in low complexity; the sequence is QQQHLHRQLPPTAALAPGAPRAARG. 3 disordered regions span residues 35–113, 508–579, and 971–1096; these read QQQH…PPQL, NYLP…DGEP, and SRSS…RKED. Omega-N-methylarginine is present on Arg58. Basic residues predominate over residues 82 to 95; that stretch reads TRHHHPAHHFHHHG. Positions 101–113 are enriched in pro residues; the sequence is LHPPLPPPPPPQL. The span at 540 to 559 shows a compositional bias: basic and acidic residues; sequence HITEAFHHQPEWGNPNRDRG. Arg977 bears the Omega-N-methylarginine mark. Basic and acidic residues-rich tracts occupy residues 1041-1050 and 1076-1096; these read IKEEKSDHRL and NREK…RKED. Residue Lys1042 forms a Glycyl lysine isopeptide (Lys-Gly) (interchain with G-Cter in SUMO2) linkage.

This sequence belongs to the constitutive coactivator of PPAR-gamma family. Expressed at low levels in a number of tissues.

The polypeptide is Constitutive coactivator of PPAR-gamma-like protein 2 (FAM120C) (Homo sapiens (Human)).